We begin with the raw amino-acid sequence, 953 residues long: Leucine-rich repeat receptor protein kinase HPCA1 (953 aa).

A signal peptide spans 1-23 (MSSRTGASLLLILFFFQICSVSA). The Extracellular portion of the chain corresponds to 24-558 (LTNGLDASAL…EVSSKSSNKS (535 aa)). LRR repeat units follow at residues 64 to 88 (NDRVVSISLGNLDLEGKLPADISFL), 89 to 113 (SELRILDLSYNPKLSGPLPPNIGNL), 115 to 137 (KLRNLILVGCSFSGQIPESIGTL), 138 to 162 (KELIYLSLNLNKFSGTIPPSIGLLS), 164 to 187 (LYWFDIADNQIEGELPVSNGTSAP), and 192 to 216 (LLQTKHFHFGKNKLSGNIPKELFSS). Asparagine 182 is a glycosylation site (N-linked (GlcNAc...) asparagine). Asparagine 217 carries an N-linked (GlcNAc...) asparagine glycan. LRR repeat units follow at residues 218-241 (MSLIHVLFDGNQFTGEIPETLSLV), 242-265 (KTLTVLRLDRNKLIGDIPSYLNNL), 266-290 (TNLNELYLANNRFTGTLPNLTSLTS), 292-311 (YTLDVSNNTLDFSPIPSWIS), 313-337 (LPSLSTLRMEGIQLNGPIPISFFSP), 339-361 (QLQTVILKRNSIVESLDFGTDVS), and 362-384 (SQLEFVDLQYNEITDYKPSANKV). Residues asparagine 264, asparagine 284, and asparagine 298 are each glycosylated (N-linked (GlcNAc...) asparagine). The N-linked (GlcNAc...) asparagine glycan is linked to asparagine 411. 2 cysteine pairs are disulfide-bonded: cysteine 421–cysteine 424 and cysteine 434–cysteine 436. N-linked (GlcNAc...) asparagine glycans are attached at residues asparagine 456, asparagine 459, asparagine 510, and asparagine 523. A helical membrane pass occupies residues 559 to 579 (ILIGAVVGVVVLLLLLTIAGI). The Cytoplasmic portion of the chain corresponds to 580 to 953 (YALRQKKRAE…NFPASKLEPQ (374 aa)). A phosphoserine mark is found at serine 606 and serine 607. The 275-residue stretch at 631–905 (FSEANDVGGG…EVVKEIENIM (275 aa)) folds into the Protein kinase domain. ATP contacts are provided by residues 637–645 (VGGGGYGKV) and lysine 659. Aspartate 755 acts as the Proton acceptor in catalysis. 3 positions are modified to phosphothreonine: threonine 786, threonine 789, and threonine 790. Residues 912–921 (PNSDSATSSR) show a composition bias toward polar residues. Positions 912 to 953 (PNSDSATSSRTYEDAIKGSGDPYGSESFQYSGNFPASKLEPQ) are disordered. Serine 942 carries the post-translational modification Phosphoserine.

This sequence belongs to the protein kinase superfamily. Ser/Thr protein kinase family. Autophosphorylated at Ser-606, Ser-607, Thr-786, Thr-789, Thr-790 and Ser-942 in response to extracellular hydrogen peroxide. As to expression, widely expressed.

The protein localises to the cell membrane. The catalysed reaction is L-seryl-[protein] + ATP = O-phospho-L-seryl-[protein] + ADP + H(+). It carries out the reaction L-threonyl-[protein] + ATP = O-phospho-L-threonyl-[protein] + ADP + H(+). Its activity is regulated as follows. Activated by autophosphorylation on serine and threonine residues in response to extracellular hydrogen peroxide. Leucine-rich repeat receptor protein kinase that acts as sensor of extracellular hydrogen peroxide. Required for intracellular calcium influx in response to extracellular hydrogen peroxide. Mediates hydrogen peroxide-induced activation of calcium channels in guard cells and is required for stomatal closure. In Arabidopsis thaliana (Mouse-ear cress), this protein is Leucine-rich repeat receptor protein kinase HPCA1.